We begin with the raw amino-acid sequence, 211 residues long: Arginine exporter protein ArgO (211 aa).

A run of 6 helical transmembrane segments spans residues 1 to 21 (MFTY…PLGP), 37 to 57 (LMIA…GIFG), 68 to 88 (LLAI…FGAL), 111 to 131 (IIIT…DTFV), 147 to 167 (WFAL…ALLA), and 182 to 202 (IINI…AKEG).

Belongs to the LysE/ArgO transporter (TC 2.A.75) family.

The protein resides in the cell inner membrane. It catalyses the reaction L-arginine(in) = L-arginine(out). In terms of biological role, involved in the export of arginine. Important to control the intracellular level of arginine and the correct balance between arginine and lysine. The chain is Arginine exporter protein ArgO from Klebsiella pneumoniae (strain 342).